The sequence spans 95 residues: Aspartyl/glutamyl-tRNA(Asn/Gln) amidotransferase subunit C (95 aa).

Belongs to the GatC family. In terms of assembly, heterotrimer of A, B and C subunits.

The catalysed reaction is L-glutamyl-tRNA(Gln) + L-glutamine + ATP + H2O = L-glutaminyl-tRNA(Gln) + L-glutamate + ADP + phosphate + H(+). It carries out the reaction L-aspartyl-tRNA(Asn) + L-glutamine + ATP + H2O = L-asparaginyl-tRNA(Asn) + L-glutamate + ADP + phosphate + 2 H(+). In terms of biological role, allows the formation of correctly charged Asn-tRNA(Asn) or Gln-tRNA(Gln) through the transamidation of misacylated Asp-tRNA(Asn) or Glu-tRNA(Gln) in organisms which lack either or both of asparaginyl-tRNA or glutaminyl-tRNA synthetases. The reaction takes place in the presence of glutamine and ATP through an activated phospho-Asp-tRNA(Asn) or phospho-Glu-tRNA(Gln). This Rhodopseudomonas palustris (strain TIE-1) protein is Aspartyl/glutamyl-tRNA(Asn/Gln) amidotransferase subunit C.